A 510-amino-acid polypeptide reads, in one-letter code: D-alanine--D-alanyl carrier protein ligase (510 aa).

157–158 (TS) is a binding site for ATP. Aspartate 202 lines the D-alanine pocket. 297-302 (NTYGPT) contributes to the ATP binding site. Residue valine 306 coordinates D-alanine. Aspartate 389 and lysine 498 together coordinate ATP. Residue lysine 498 participates in D-alanine binding.

It belongs to the ATP-dependent AMP-binding enzyme family. DltA subfamily.

The protein localises to the cytoplasm. It carries out the reaction holo-[D-alanyl-carrier protein] + D-alanine + ATP = D-alanyl-[D-alanyl-carrier protein] + AMP + diphosphate. Its pathway is cell wall biogenesis; lipoteichoic acid biosynthesis. Its function is as follows. Catalyzes the first step in the D-alanylation of lipoteichoic acid (LTA), the activation of D-alanine and its transfer onto the D-alanyl carrier protein (Dcp) DltC. In an ATP-dependent two-step reaction, forms a high energy D-alanyl-AMP intermediate, followed by transfer of the D-alanyl residue as a thiol ester to the phosphopantheinyl prosthetic group of the Dcp. D-alanylation of LTA plays an important role in modulating the properties of the cell wall in Gram-positive bacteria, influencing the net charge of the cell wall. The chain is D-alanine--D-alanyl carrier protein ligase from Listeria innocua serovar 6a (strain ATCC BAA-680 / CLIP 11262).